The following is a 143-amino-acid chain: Mannitol-specific phosphotransferase enzyme IIA component (143 aa).

A PTS EIIA type-2 domain is found at 2–142; it reads QVLAKENIKL…EDLIAIFNEV (141 aa). The Tele-phosphohistidine intermediate role is filled by His62. His62 carries the phosphohistidine; by HPr modification. Ser74 bears the Phosphoserine mark.

The protein resides in the cytoplasm. The phosphoenolpyruvate-dependent sugar phosphotransferase system (sugar PTS), a major carbohydrate active transport system, catalyzes the phosphorylation of incoming sugar substrates concomitantly with their translocation across the cell membrane. The enzyme II CmtAB PTS system is involved in D-mannitol transport. This is Mannitol-specific phosphotransferase enzyme IIA component (mtlF) from Bacillus subtilis (strain 168).